Here is a 610-residue protein sequence, read N- to C-terminus: Protein SAN1 (610 aa).

Residues 1–10 (MSESGQEQNR) are compositionally biased toward polar residues. Disordered stretches follow at residues 1-36 (MSESGQEQNRGTNTSPNNAENNNNSNAASGPLNGGA) and 176-231 (VDST…PSIP). A compositionally biased stretch (low complexity) spans 11–36 (GTNTSPNNAENNNNSNAASGPLNGGA). Residues 194–203 (EGTKKRKDNE) are compositionally biased toward basic and acidic residues. Residues 210 to 223 (TADNDSNPSITNAT) show a composition bias toward polar residues. An RING-type zinc finger spans residues 240–280 (NDEETNPSYKHSPIKLPCGHIFGRECIYKWSRLENSCPLCR). Disordered regions lie at residues 318 to 348 (TAVNSTNENSSAPSENTSNTTVPTIGNASSG), 360 to 453 (VPQN…TDPH), 471 to 502 (GTSDTSATTAPGAQTVHNQGRNDSSSSDTTQG), 514 to 554 (GHFT…GVAS), and 569 to 610 (NNNS…RSSQ). Residues 319-348 (AVNSTNENSSAPSENTSNTTVPTIGNASSG) show a composition bias toward polar residues. Composition is skewed to low complexity over residues 384–406 (NGPSSTTQNPPSNSGGSNNNQSP) and 425–447 (PSASDSSASPSAANGPNSNNTSS). The segment covering 471 to 492 (GTSDTSATTAPGAQTVHNQGRN) has biased composition (polar residues). The span at 493–502 (DSSSSDTTQG) shows a compositional bias: low complexity. 2 stretches are compositionally biased toward polar residues: residues 533–554 (QQRGGSTGENNRNNLFSSGVAS) and 592–610 (DTTIHNDVPNDNNEQRSSQ).

Its function is as follows. Plays a specific role in mating-type regulation of yeast, by acting post-translationally to control the stability or activity of the SIR4 proteins. In Saccharomyces cerevisiae (strain ATCC 204508 / S288c) (Baker's yeast), this protein is Protein SAN1 (SAN1).